Consider the following 699-residue polypeptide: Elongation factor G (699 aa).

The 281-residue stretch at 8 to 288 (EDYRNFGIMA…AVVDYLPSPI (281 aa)) folds into the tr-type G domain. GTP is bound by residues 17–24 (AHIDAGKT), 86–90 (DTPGH), and 140–143 (NKMD).

The protein belongs to the TRAFAC class translation factor GTPase superfamily. Classic translation factor GTPase family. EF-G/EF-2 subfamily.

The protein resides in the cytoplasm. Functionally, catalyzes the GTP-dependent ribosomal translocation step during translation elongation. During this step, the ribosome changes from the pre-translocational (PRE) to the post-translocational (POST) state as the newly formed A-site-bound peptidyl-tRNA and P-site-bound deacylated tRNA move to the P and E sites, respectively. Catalyzes the coordinated movement of the two tRNA molecules, the mRNA and conformational changes in the ribosome. The chain is Elongation factor G from Rhizobium meliloti (strain 1021) (Ensifer meliloti).